The following is a 126-amino-acid chain: uncharacterized protein (126 aa).

2 disordered regions span residues 15–72 and 93–126; these read PEWG…SDPQ and TQIP…TTSN. Basic and acidic residues-rich tracts occupy residues 29–46 and 55–64; these read DPLD…RVPE and VQEDSREHGQ.

This is an uncharacterized protein from Homo sapiens (Human).